The sequence spans 883 residues: Alanine--tRNA ligase (883 aa).

Residues His-560, His-564, Cys-665, and His-669 each coordinate Zn(2+).

This sequence belongs to the class-II aminoacyl-tRNA synthetase family. The cofactor is Zn(2+).

The protein resides in the cytoplasm. It carries out the reaction tRNA(Ala) + L-alanine + ATP = L-alanyl-tRNA(Ala) + AMP + diphosphate. In terms of biological role, catalyzes the attachment of alanine to tRNA(Ala) in a two-step reaction: alanine is first activated by ATP to form Ala-AMP and then transferred to the acceptor end of tRNA(Ala). Also edits incorrectly charged Ser-tRNA(Ala) and Gly-tRNA(Ala) via its editing domain. The protein is Alanine--tRNA ligase of Mesomycoplasma hyopneumoniae (strain 7448) (Mycoplasma hyopneumoniae).